A 142-amino-acid polypeptide reads, in one-letter code: Large ribosomal subunit protein uL13 (142 aa).

This sequence belongs to the universal ribosomal protein uL13 family. In terms of assembly, part of the 50S ribosomal subunit.

In terms of biological role, this protein is one of the early assembly proteins of the 50S ribosomal subunit, although it is not seen to bind rRNA by itself. It is important during the early stages of 50S assembly. The sequence is that of Large ribosomal subunit protein uL13 from Psychrobacter sp. (strain PRwf-1).